Here is a 202-residue protein sequence, read N- to C-terminus: Tetranectin (202 aa).

Residues 1 to 21 (MELWGPCVLLCLFSLLTQVTA) form the signal peptide. 3 disulfide bridges follow: Cys71/Cys81, Cys98/Cys197, and Cys173/Cys189. The C-type lectin domain occupies 77-198 (VHMKCFLAFV…CRDKLPYVCQ (122 aa)).

Homotrimer.

The protein resides in the secreted. Functionally, tetranectin binds to plasminogen and to isolated kringle 4. May be involved in the packaging of molecules destined for exocytosis. Plays a role in retinal function. This is Tetranectin (CLEC3B) from Bos taurus (Bovine).